A 187-amino-acid polypeptide reads, in one-letter code: Protein canopy-1 (187 aa).

The first 24 residues, 1–24 (MSPWIKHICLVLVAAFMLVKTTES), serve as a signal peptide directing secretion. Residues 28–181 (EALYCSACMA…EVSDHCKSSV (154 aa)) enclose the Saposin B-type domain. Intrachain disulfides connect Cys-32-Cys-177, Cys-35-Cys-170, and Cys-90-Cys-143. The short motif at 184–187 (HSEL) is the Prevents secretion from ER element.

Belongs to the canopy family. In terms of assembly, homodimer. Interacts with fgfr1.

Its subcellular location is the endoplasmic reticulum. Functionally, involved in the maintenance of the midbrain-hindbrain boundary (MHB) organizer. Contributes to a positive-feedback loop of FGF signaling in the MHB, enabling the MHB to exert its role as an organizer for the tectal and cerebellar development. The chain is Protein canopy-1 (cnpy1) from Danio rerio (Zebrafish).